Consider the following 167-residue polypeptide: MNIVVYPGTFDPVTNGHYDLIERASRMFDKVVVAVAASPRKQPTLSLETRVALIEEVTADLDNVTVTGFSCLLTQLLAQQNARIILRGLRAVSDFEYELQLANMNRAQAPDVESLFLTPEVENSYISSTIVREIARLGGDVSKLVHPCVVDALSRHFAQDPSSPKTQ.

Threonine 9 contributes to the substrate binding site. Residues 9-10 and histidine 17 contribute to the ATP site; that span reads TF. Substrate contacts are provided by lysine 41, leucine 73, and arginine 87. ATP is bound by residues 88–90, glutamate 98, and 123–129; these read GLR and NSYISST.

The protein belongs to the bacterial CoaD family. As to quaternary structure, homohexamer. Requires Mg(2+) as cofactor.

The protein resides in the cytoplasm. It catalyses the reaction (R)-4'-phosphopantetheine + ATP + H(+) = 3'-dephospho-CoA + diphosphate. The protein operates within cofactor biosynthesis; coenzyme A biosynthesis; CoA from (R)-pantothenate: step 4/5. Its function is as follows. Reversibly transfers an adenylyl group from ATP to 4'-phosphopantetheine, yielding dephospho-CoA (dPCoA) and pyrophosphate. This chain is Phosphopantetheine adenylyltransferase, found in Chromohalobacter salexigens (strain ATCC BAA-138 / DSM 3043 / CIP 106854 / NCIMB 13768 / 1H11).